Consider the following 365-residue polypeptide: DNA replication and repair protein RecF (365 aa).

An ATP-binding site is contributed by 30–37; it reads GRNAQGKT.

This sequence belongs to the RecF family.

It localises to the cytoplasm. In terms of biological role, the RecF protein is involved in DNA metabolism; it is required for DNA replication and normal SOS inducibility. RecF binds preferentially to single-stranded, linear DNA. It also seems to bind ATP. This Streptococcus pneumoniae (strain 70585) protein is DNA replication and repair protein RecF.